Here is a 344-residue protein sequence, read N- to C-terminus: Ferrochelatase (344 aa).

2 residues coordinate Fe cation: His-191 and Glu-271.

Belongs to the ferrochelatase family.

Its subcellular location is the cytoplasm. The catalysed reaction is heme b + 2 H(+) = protoporphyrin IX + Fe(2+). It participates in porphyrin-containing compound metabolism; protoheme biosynthesis; protoheme from protoporphyrin-IX: step 1/1. In terms of biological role, catalyzes the ferrous insertion into protoporphyrin IX. The polypeptide is Ferrochelatase (Pelagibacter ubique (strain HTCC1062)).